Here is a 414-residue protein sequence, read N- to C-terminus: Multifunctional CCA protein (414 aa).

ATP contacts are provided by Gly-8 and Arg-11. Positions 8 and 11 each coordinate CTP. Mg(2+) contacts are provided by Glu-21 and Asp-23. Arg-91, Arg-137, and Arg-140 together coordinate ATP. Residues Arg-91, Arg-137, and Arg-140 each contribute to the CTP site. In terms of domain architecture, HD spans 228-329; sequence TGIHTLMTLA…LKLFDAIDVW (102 aa).

The protein belongs to the tRNA nucleotidyltransferase/poly(A) polymerase family. Bacterial CCA-adding enzyme type 1 subfamily. Monomer. Can also form homodimers and oligomers. Requires Mg(2+) as cofactor. Ni(2+) serves as cofactor.

It carries out the reaction a tRNA precursor + 2 CTP + ATP = a tRNA with a 3' CCA end + 3 diphosphate. It catalyses the reaction a tRNA with a 3' CCA end + 2 CTP + ATP = a tRNA with a 3' CCACCA end + 3 diphosphate. Functionally, catalyzes the addition and repair of the essential 3'-terminal CCA sequence in tRNAs without using a nucleic acid template. Adds these three nucleotides in the order of C, C, and A to the tRNA nucleotide-73, using CTP and ATP as substrates and producing inorganic pyrophosphate. tRNA 3'-terminal CCA addition is required both for tRNA processing and repair. Also involved in tRNA surveillance by mediating tandem CCA addition to generate a CCACCA at the 3' terminus of unstable tRNAs. While stable tRNAs receive only 3'-terminal CCA, unstable tRNAs are marked with CCACCA and rapidly degraded. In Yersinia enterocolitica serotype O:8 / biotype 1B (strain NCTC 13174 / 8081), this protein is Multifunctional CCA protein.